Here is a 106-residue protein sequence, read N- to C-terminus: Large ribosomal subunit protein uL24 (106 aa).

This sequence belongs to the universal ribosomal protein uL24 family. As to quaternary structure, part of the 50S ribosomal subunit.

One of two assembly initiator proteins, it binds directly to the 5'-end of the 23S rRNA, where it nucleates assembly of the 50S subunit. Its function is as follows. One of the proteins that surrounds the polypeptide exit tunnel on the outside of the subunit. This Parabacteroides distasonis (strain ATCC 8503 / DSM 20701 / CIP 104284 / JCM 5825 / NCTC 11152) protein is Large ribosomal subunit protein uL24.